A 100-amino-acid chain; its full sequence is NADH-quinone oxidoreductase subunit K (100 aa).

Helical transmembrane passes span leucine 4–methionine 24, isoleucine 28–valine 48, and isoleucine 60–leucine 80.

This sequence belongs to the complex I subunit 4L family. NDH-1 is composed of 13 different subunits. Subunits NuoA, H, J, K, L, M, N constitute the membrane sector of the complex.

Its subcellular location is the cell membrane. It catalyses the reaction a quinone + NADH + 5 H(+)(in) = a quinol + NAD(+) + 4 H(+)(out). NDH-1 shuttles electrons from NADH, via FMN and iron-sulfur (Fe-S) centers, to quinones in the respiratory chain. The immediate electron acceptor for the enzyme in this species is believed to be ubiquinone. Couples the redox reaction to proton translocation (for every two electrons transferred, four hydrogen ions are translocated across the cytoplasmic membrane), and thus conserves the redox energy in a proton gradient. The polypeptide is NADH-quinone oxidoreductase subunit K (Buchnera aphidicola subsp. Baizongia pistaciae (strain Bp)).